We begin with the raw amino-acid sequence, 243 residues long: Mesoderm posterior protein 1 (243 aa).

The tract at residues 1-86 is disordered; the sequence is MAQPLCEPRS…QRQSASEREK (86 aa). The span at 27-36 shows a compositional bias: polar residues; the sequence is DGNSVCSPAW. The bHLH domain maps to 76–130; the sequence is GQRQSASEREKLRMRTLARALHELRRFLPPSVAPTGQNLTKIETLRLAIRYIGHL. The short motif at 153–157 is the CPLCP element; the sequence is CPLCP. The interval 204–228 is disordered; sequence AETASQERQEMEPSPSSPLFSSDML.

No expression was detected in adult tissues except the testis. Expression in the testis was regulated developmentally; expressed 2 weeks after birth, and increases, reaching the full expression level in mature testes.

Its subcellular location is the nucleus. Transcription factor. Plays a role in the epithelialization of somitic mesoderm and in the development of cardiac mesoderm. Defines the rostrocaudal patterning of the somites by participating in distinct Notch pathways. The protein is Mesoderm posterior protein 1 (Mesp1) of Mus musculus (Mouse).